We begin with the raw amino-acid sequence, 780 residues long: Dynamin-related protein 3B (780 aa).

S2 bears the N-acetylserine mark. Positions 40-315 (TIALPQVAVV…LVQHIKALLP (276 aa)) constitute a Dynamin-type G domain. Residues 50–57 (GSQSSGKS) are G1 motif. 50–57 (GSQSSGKS) is a GTP binding site. Residues 76–78 (CTR) form a G2 motif region. The segment at 157 to 160 (DLPG) is G3 motif. GTP contacts are provided by residues 157–161 (DLPGI) and 226–229 (TKLD). Residues 226–229 (TKLD) form a G4 motif region. Positions 256-259 (VNRS) are G5 motif. 2 disordered regions span residues 536–558 (PVAR…QIKT) and 573–592 (QAVP…STSW). Positions 539–548 (RPRDTVEPER) are enriched in basic and acidic residues. Positions 549–558 (TASSGSQIKT) are enriched in polar residues. One can recognise a GED domain in the interval 654–745 (IEITKLLLKS…TLDELPLEAE (92 aa)). The segment covering 753–770 (IGSEAKHEELPGTRRSRT) has biased composition (basic and acidic residues). A disordered region spans residues 753–780 (IGSEAKHEELPGTRRSRTETNGNGRLHM). Positions 771–780 (ETNGNGRLHM) are enriched in polar residues.

This sequence belongs to the TRAFAC class dynamin-like GTPase superfamily. Dynamin/Fzo/YdjA family. In terms of assembly, interacts with ARC5 on peroxisomes and ELM1 on mitochondria.

It is found in the mitochondrion. Its subcellular location is the peroxisome. Functionally, involved in the control of mitochondrial and peroxisomal division and morphology. This chain is Dynamin-related protein 3B (DRP3B), found in Arabidopsis thaliana (Mouse-ear cress).